The sequence spans 250 residues: 2,3-bisphosphoglycerate-dependent phosphoglycerate mutase (250 aa).

Substrate contacts are provided by residues 8-15 (RHGESQWN), 21-22 (TG), Arg60, 87-90 (ERHY), Lys98, 114-115 (RR), and 183-184 (GN). The active-site Tele-phosphohistidine intermediate is the His9. Glu87 (proton donor/acceptor) is an active-site residue.

This sequence belongs to the phosphoglycerate mutase family. BPG-dependent PGAM subfamily. In terms of assembly, homodimer.

It catalyses the reaction (2R)-2-phosphoglycerate = (2R)-3-phosphoglycerate. It participates in carbohydrate degradation; glycolysis; pyruvate from D-glyceraldehyde 3-phosphate: step 3/5. Functionally, catalyzes the interconversion of 2-phosphoglycerate and 3-phosphoglycerate. The chain is 2,3-bisphosphoglycerate-dependent phosphoglycerate mutase from Bordetella parapertussis (strain 12822 / ATCC BAA-587 / NCTC 13253).